The sequence spans 393 residues: Inulin fructotransferase [DFA-I-forming] (393 aa).

It catalyses the reaction Produces alpha-D-fructofuranose beta-D-fructofuranose 1,2':2,1'-dianhydride (DFA I) by successively eliminating the diminishing (2-&gt;1)-beta-D-fructan (inulin) chain from the terminal D-fructosyl-D-fructosyl disaccharide.. The protein is Inulin fructotransferase [DFA-I-forming] of Arthrobacter globiformis.